The primary structure comprises 194 residues: Ribosomal RNA small subunit methyltransferase G (194 aa).

Residues Gly70, Tyr75, 121–122, and Arg135 contribute to the S-adenosyl-L-methionine site; that span reads VE.

This sequence belongs to the methyltransferase superfamily. RNA methyltransferase RsmG family.

The protein resides in the cytoplasm. It catalyses the reaction guanosine(527) in 16S rRNA + S-adenosyl-L-methionine = N(7)-methylguanosine(527) in 16S rRNA + S-adenosyl-L-homocysteine. Its function is as follows. Specifically methylates the N7 position of guanine in position 527 of 16S rRNA. The protein is Ribosomal RNA small subunit methyltransferase G of Aliarcobacter butzleri (strain RM4018) (Arcobacter butzleri).